The sequence spans 273 residues: MAIVKCKPTSPGRRHVVKIVNQDLYKGKPFAALLDKKDKSGGRNNNGRITTRHIGGGHKQHYRIVDFKRDKDGIPAKVERLEYDPNRTANIALVLYADGERRYILAPKGLKAGDAIASGADAAIKVGNTLPMRNIPVGSTVHAVEMKPGKGAQLARSAGTFIQILAREGNYVTLRLRSGEVRKVLAECRATIGEVGNSEHMLRQLGKAGANRWRGIRPTVRGMAMNPVDHPHGGGEGRNKGMQPVSPWGQKAKGFKTRKNKRTDKYIVRRRNK.

2 disordered regions span residues 35 to 54 (DKKD…TRHI) and 222 to 273 (GMAM…RRNK). A compositionally biased stretch (basic and acidic residues) spans 229-239 (DHPHGGGEGRN). The segment covering 253 to 273 (KGFKTRKNKRTDKYIVRRRNK) has biased composition (basic residues).

Belongs to the universal ribosomal protein uL2 family. As to quaternary structure, part of the 50S ribosomal subunit. Forms a bridge to the 30S subunit in the 70S ribosome.

One of the primary rRNA binding proteins. Required for association of the 30S and 50S subunits to form the 70S ribosome, for tRNA binding and peptide bond formation. It has been suggested to have peptidyltransferase activity; this is somewhat controversial. Makes several contacts with the 16S rRNA in the 70S ribosome. The protein is Large ribosomal subunit protein uL2 of Aeromonas hydrophila subsp. hydrophila (strain ATCC 7966 / DSM 30187 / BCRC 13018 / CCUG 14551 / JCM 1027 / KCTC 2358 / NCIMB 9240 / NCTC 8049).